Here is a 332-residue protein sequence, read N- to C-terminus: Biotin synthase (332 aa).

Residues 52–282 (FPENEVEFCS…KAELRLCGGR (231 aa)) enclose the Radical SAM core domain. Residues C70, C74, and C77 each contribute to the [4Fe-4S] cluster site. [2Fe-2S] cluster is bound by residues C114, C147, C207, and R277.

This sequence belongs to the radical SAM superfamily. Biotin synthase family. In terms of assembly, homodimer. The cofactor is [4Fe-4S] cluster. Requires [2Fe-2S] cluster as cofactor.

The enzyme catalyses (4R,5S)-dethiobiotin + (sulfur carrier)-SH + 2 reduced [2Fe-2S]-[ferredoxin] + 2 S-adenosyl-L-methionine = (sulfur carrier)-H + biotin + 2 5'-deoxyadenosine + 2 L-methionine + 2 oxidized [2Fe-2S]-[ferredoxin]. Its pathway is cofactor biosynthesis; biotin biosynthesis; biotin from 7,8-diaminononanoate: step 2/2. In terms of biological role, catalyzes the conversion of dethiobiotin (DTB) to biotin by the insertion of a sulfur atom into dethiobiotin via a radical-based mechanism. In Aquifex aeolicus (strain VF5), this protein is Biotin synthase.